Here is a 215-residue protein sequence, read N- to C-terminus: Probable phosphoglycerate mutase GpmB (215 aa).

Residues 8-15 (RHGETQWN), 21-22 (QG), R58, R60, 82-85 (ELNM), 104-105 (RR), and 151-152 (GI) each bind substrate. The active-site Tele-phosphohistidine intermediate is the H9. E82 acts as the Proton donor/acceptor in catalysis.

This sequence belongs to the phosphoglycerate mutase family. GpmB subfamily.

The catalysed reaction is (2R)-2-phosphoglycerate = (2R)-3-phosphoglycerate. Its pathway is carbohydrate degradation; glycolysis; pyruvate from D-glyceraldehyde 3-phosphate: step 3/5. This is Probable phosphoglycerate mutase GpmB from Escherichia fergusonii (strain ATCC 35469 / DSM 13698 / CCUG 18766 / IAM 14443 / JCM 21226 / LMG 7866 / NBRC 102419 / NCTC 12128 / CDC 0568-73).